The primary structure comprises 315 residues: Prephenate dehydratase (315 aa).

Residues 3–189 form the Prephenate dehydratase domain; the sequence is RIAYLGPEGT…ARTRFVLVGP (187 aa). Residues 203–280 form the ACT domain; the sequence is SVVLRIDNAP…ADVRYLGSWP (78 aa).

Homodimer.

It catalyses the reaction prephenate + H(+) = 3-phenylpyruvate + CO2 + H2O. It functions in the pathway amino-acid biosynthesis; L-phenylalanine biosynthesis; phenylpyruvate from prephenate: step 1/1. This is Prephenate dehydratase (pheA) from Mycobacterium avium (strain 104).